Consider the following 482-residue polypeptide: UDP-N-acetylmuramate--L-alanine ligase (482 aa).

The tract at residues 1-26 is disordered; the sequence is MPQLPMTDSAPLPTPAPSSPAQPSAQ. Residue 140–146 participates in ATP binding; it reads GTHGKTT.

This sequence belongs to the MurCDEF family.

It localises to the cytoplasm. It carries out the reaction UDP-N-acetyl-alpha-D-muramate + L-alanine + ATP = UDP-N-acetyl-alpha-D-muramoyl-L-alanine + ADP + phosphate + H(+). It functions in the pathway cell wall biogenesis; peptidoglycan biosynthesis. In terms of biological role, cell wall formation. In Deinococcus radiodurans (strain ATCC 13939 / DSM 20539 / JCM 16871 / CCUG 27074 / LMG 4051 / NBRC 15346 / NCIMB 9279 / VKM B-1422 / R1), this protein is UDP-N-acetylmuramate--L-alanine ligase.